The sequence spans 49 residues: Splenin (49 aa).

Residues 4-47 (LEDPSVLTKEKLKSELVANNVTLPAGEQRKEVYVELYLQHLTAL) enclose the LEM-like domain. Residues 32–36 (RKEVY) form an essential for biological activity region.

This sequence belongs to the thymopoietin family.

Its function is as follows. Hormone of the spleen with pleiotropic actions on prothymocytes, mature T-cells, the nicotinic acetylcholine receptor, and pituitary corticotrophs. The chain is Splenin (SP) from Bos taurus (Bovine).